Reading from the N-terminus, the 425-residue chain is MRNASGFLKTAGAPLVSATWLPPSPPPAMPMVAAGPQMERVDNGSQGAPQLFLTSALARGVSGVFVWTALLLTGHQIYSHLRSYTVPREQRFVIRLLFIVPIYAFDSWLSLLLLGGHPYYVYFDSVRDCYEAFVIYSFLTLCFQYLGGESAIMAEIRGKPIRSSCFYGTCCLRGMSYSITFLRFCKQATLQFCIVKPVMALITIILQAFDKYHDGDFNIHSGYLYVTLVYNASVSLALYALFLFYFATRDLLRPFEPVLKFLTIKAIIFLSFWQGMLLAILERCGVIPEVQAVDGTRVGAGTLAAGYQNFLICIEMLFASLALRYAFPSQVYSEKKNSPAPPAPMQSISSGLKETISPQDIVQDAIHNFSPAYQQYTQQSTHEAPGPGQGGHPSPSTHPGPASGSGGGKKSRNIEKRMLIPSEDL.

The next 7 helical transmembrane spans lie at 51-71, 96-116, 133-153, 189-209, 226-246, 261-281, and 303-323; these read LFLT…TALL, LLFI…LLGG, FVIY…SAIM, TLQF…LQAF, VTLV…LFYF, FLTI…LAIL, and LAAG…SLAL. Positions 375 to 425 are disordered; sequence QYTQQSTHEAPGPGQGGHPSPSTHPGPASGSGGGKKSRNIEKRMLIPSEDL. Over residues 392 to 402 the composition is skewed to low complexity; that stretch reads HPSPSTHPGPA.

This sequence belongs to the TMEM184 family. As to expression, expressed in vascular cells (at protein level).

The protein resides in the cell membrane. It localises to the cytoplasm. The protein localises to the perinuclear region. It is found in the early endosome membrane. Its subcellular location is the endosome. The protein resides in the cytoplasmic vesicle. It localises to the secretory vesicle membrane. The protein localises to the cytoplasmic vesicle membrane. In terms of biological role, acts as a heparin receptor in vascular cells. May be involved in vesicle transport in exocrine cells and Sertoli cells. The chain is Transmembrane protein 184A (Tmem184a) from Rattus norvegicus (Rat).